Consider the following 179-residue polypeptide: UPF0227 protein VC0395_A1482/VC395_2007 (179 aa).

Belongs to the UPF0227 family.

The sequence is that of UPF0227 protein VC0395_A1482/VC395_2007 from Vibrio cholerae serotype O1 (strain ATCC 39541 / Classical Ogawa 395 / O395).